A 351-amino-acid chain; its full sequence is Photosystem II D2 protein (351 aa).

The helical transmembrane segment at 39 to 59 (TAYLAIGGWLTGTTFVTSWYT) threads the bilayer. Histidine 116 serves as a coordination point for chlorophyll a. Residues 123-139 (GFMLRQFEISRLVGIRP) form a helical membrane-spanning segment. The pheophytin a site is built by glutamine 128 and asparagine 141. Residues 151 to 164 (VFVSVFLIYPLGQS) traverse the membrane as a helical segment. Position 196 (histidine 196) interacts with chlorophyll a. The chain crosses the membrane as a helical span at residues 206–226 (GALLSAIHGVTVENTLYEDGE). Histidine 213 and phenylalanine 260 together coordinate a plastoquinone. Position 213 (histidine 213) interacts with Fe cation. Histidine 267 lines the Fe cation pocket. Residues 277 to 293 (GLWTSSIGIIGLALNLR) traverse the membrane as a helical segment.

Belongs to the reaction center PufL/M/PsbA/D family. As to quaternary structure, PSII is composed of 1 copy each of membrane proteins PsbA, PsbB, PsbC, PsbD, PsbE, PsbF, PsbH, PsbI, PsbJ, PsbK, PsbL, PsbM, PsbT, PsbX, PsbY, PsbZ, Psb30/Ycf12, peripheral proteins PsbO, CyanoQ (PsbQ), PsbU, PsbV and a large number of cofactors. It forms dimeric complexes. Requires The D1/D2 heterodimer binds P680, chlorophylls that are the primary electron donor of PSII, and subsequent electron acceptors. It shares a non-heme iron and each subunit binds pheophytin, quinone, additional chlorophylls, carotenoids and lipids. There is also a Cl(-1) ion associated with D1 and D2, which is required for oxygen evolution. The PSII complex binds additional chlorophylls, carotenoids and specific lipids. as cofactor.

It is found in the host cellular thylakoid membrane. The enzyme catalyses 2 a plastoquinone + 4 hnu + 2 H2O = 2 a plastoquinol + O2. Functionally, photosystem II (PSII) is a light-driven water:plastoquinone oxidoreductase that uses light energy to abstract electrons from H(2)O, generating O(2) and a proton gradient subsequently used for ATP formation. It consists of a core antenna complex that captures photons, and an electron transfer chain that converts photonic excitation into a charge separation. The D1/D2 (PsbA/PsbD) reaction center heterodimer binds P680, the primary electron donor of PSII as well as several subsequent electron acceptors. D2 is needed for assembly of a stable PSII complex. This chain is Photosystem II D2 protein (psbD), found in Synechococcus.